The chain runs to 44 residues: uncharacterized protein (44 aa).

A helical transmembrane segment spans residues 6 to 26; it reads SILIRGGGGVLIVLILLLWIV.

It localises to the membrane. This is an uncharacterized protein from Ornithodoros (relapsing fever ticks).